A 115-amino-acid polypeptide reads, in one-letter code: Large ribosomal subunit protein bL19 (115 aa).

This sequence belongs to the bacterial ribosomal protein bL19 family.

Its function is as follows. This protein is located at the 30S-50S ribosomal subunit interface and may play a role in the structure and function of the aminoacyl-tRNA binding site. This chain is Large ribosomal subunit protein bL19, found in Fervidobacterium nodosum (strain ATCC 35602 / DSM 5306 / Rt17-B1).